A 1045-amino-acid chain; its full sequence is Putative sodium-coupled neutral amino acid transporter 10 (1045 aa).

Helical transmembrane passes span 8–28 (LIMNIVNSIVGVSVLTMPFCF), 33–53 (ILLGTLLLMLCTWMAHHSCMF), 85–105 (SMIGLMLGTCIAFYVVIGDLG), 117–137 (VSEGFRVFLLFSVSLCIVLPL), 150–170 (FSAMALMFYTVFMFVIVLSSF), 226–246 (IFALSLNVVTTFYITVGFFGY), 269–289 (MIRVGFMMSVAVGFPMMILPC), 320–340 (ILTLVVVFGTMLGGILIPNVE), 342–362 (ILGLTGATMGSLICLICPALI), and 375–395 (FILGVGLLILVISTYTTLTVT). Basic and acidic residues-rich tracts occupy residues 412 to 453 (KEEK…EEQI), 460 to 479 (PQKEKDTKKQEEVQLDRPDQ), and 503 to 546 (VDEK…DQAE). 2 disordered regions span residues 412–584 (KEEK…EQPP) and 606–658 (EIAE…AEAG). Over residues 564–573 (NDPNKQQLVN) the composition is skewed to polar residues. Basic and acidic residues predominate over residues 627-658 (PIKDEKNEQIPGDPGKESHVEPKAEDNQAEAG).

Belongs to the amino acid/polyamine transporter 2 family.

The protein resides in the membrane. Functionally, putative sodium-dependent amino acid/proton antiporter. This chain is Putative sodium-coupled neutral amino acid transporter 10 (slc38a10), found in Xenopus laevis (African clawed frog).